The chain runs to 410 residues: Phosphoserine phosphatase (410 aa).

The 79-residue stretch at 13–91 folds into the ACT domain; it reads LVKIFGKDRP…QAEIISGIGD (79 aa). Aspartate 187 (nucleophile) is an active-site residue. Mg(2+) contacts are provided by aspartate 187 and aspartate 189. The Proton donor role is filled by aspartate 189. Substrate contacts are provided by residues glutamate 196, arginine 232, 275 to 276, and lysine 320; that span reads SG. Aspartate 343 lines the Mg(2+) pocket. Asparagine 346 contacts substrate.

This sequence belongs to the HAD-like hydrolase superfamily. SerB family. The cofactor is Mg(2+).

The enzyme catalyses O-phospho-L-serine + H2O = L-serine + phosphate. The catalysed reaction is O-phospho-D-serine + H2O = D-serine + phosphate. It participates in amino-acid biosynthesis; L-serine biosynthesis; L-serine from 3-phospho-D-glycerate: step 3/3. Catalyzes the dephosphorylation of phosphoserine (P-Ser) in vitro. Also catalyzes the dephosphorylation of phosphothreonine (P-Thr) in vitro. This Streptomyces coelicolor (strain ATCC BAA-471 / A3(2) / M145) protein is Phosphoserine phosphatase.